A 284-amino-acid polypeptide reads, in one-letter code: uncharacterized protein (284 aa).

Residues 1-20 (MLHNIQSILQFLLFVSSVQA) form the signal peptide. The region spanning 38–121 (CFEFKKNYWI…FTVNFFRNIC (84 aa)) is the Apple domain. 3 disulfide bridges follow: C38–C121, C63–C89, and C67–C77. N256 is a glycosylation site (N-linked (GlcNAc...) asparagine). A helical transmembrane segment spans residues 264–284 (SSTGLKFTTGLLIILVVFLFL).

Its subcellular location is the membrane. This is an uncharacterized protein from Caenorhabditis elegans.